The following is a 256-amino-acid chain: 2-C-methyl-D-erythritol 4-phosphate cytidylyltransferase (256 aa).

The protein belongs to the IspD/TarI cytidylyltransferase family. IspD subfamily.

It catalyses the reaction 2-C-methyl-D-erythritol 4-phosphate + CTP + H(+) = 4-CDP-2-C-methyl-D-erythritol + diphosphate. Its pathway is isoprenoid biosynthesis; isopentenyl diphosphate biosynthesis via DXP pathway; isopentenyl diphosphate from 1-deoxy-D-xylulose 5-phosphate: step 2/6. Catalyzes the formation of 4-diphosphocytidyl-2-C-methyl-D-erythritol from CTP and 2-C-methyl-D-erythritol 4-phosphate (MEP). The sequence is that of 2-C-methyl-D-erythritol 4-phosphate cytidylyltransferase from Corynebacterium glutamicum (strain ATCC 13032 / DSM 20300 / JCM 1318 / BCRC 11384 / CCUG 27702 / LMG 3730 / NBRC 12168 / NCIMB 10025 / NRRL B-2784 / 534).